Here is a 246-residue protein sequence, read N- to C-terminus: MSFEVIPAVDMKGGKCVQLVQGVPGSEMISLDDPVEVALDWVSQGARTLHLIDLDGAIEGNRTNAPIIKKIVEKCKPQGIYIQVGGGIRSFEDAATLLDIGIDKVILSTAALKDPELIKKLSDEFGSEHINVALDSKNGKISIEGWTKESEHTAVEMGSQFEEKGAGSILFTNIDSEGLLNGVNPKPTEELVNAVTIPVIASGGVTTLEDIVTLKNTGAAGVVVGSALYKKRFTLTEAINIISDKN.

D10 serves as the catalytic Proton acceptor. D135 functions as the Proton donor in the catalytic mechanism.

It belongs to the HisA/HisF family.

The protein localises to the cytoplasm. It catalyses the reaction 1-(5-phospho-beta-D-ribosyl)-5-[(5-phospho-beta-D-ribosylamino)methylideneamino]imidazole-4-carboxamide = 5-[(5-phospho-1-deoxy-D-ribulos-1-ylimino)methylamino]-1-(5-phospho-beta-D-ribosyl)imidazole-4-carboxamide. It functions in the pathway amino-acid biosynthesis; L-histidine biosynthesis; L-histidine from 5-phospho-alpha-D-ribose 1-diphosphate: step 4/9. This is 1-(5-phosphoribosyl)-5-[(5-phosphoribosylamino)methylideneamino] imidazole-4-carboxamide isomerase from Methanococcoides burtonii (strain DSM 6242 / NBRC 107633 / OCM 468 / ACE-M).